The sequence spans 405 residues: Glucose-1-phosphate adenylyltransferase (405 aa).

Residues Tyr96, Gly161, 176–177, and Ser194 each bind alpha-D-glucose 1-phosphate; that span reads EK.

The protein belongs to the bacterial/plant glucose-1-phosphate adenylyltransferase family. Homotetramer.

It carries out the reaction alpha-D-glucose 1-phosphate + ATP + H(+) = ADP-alpha-D-glucose + diphosphate. It participates in glycan biosynthesis; glycogen biosynthesis. Its function is as follows. Involved in the biosynthesis of ADP-glucose, a building block required for the elongation reactions to produce glycogen. Catalyzes the reaction between ATP and alpha-D-glucose 1-phosphate (G1P) to produce pyrophosphate and ADP-Glc. This is Glucose-1-phosphate adenylyltransferase from Aliivibrio fischeri (strain MJ11) (Vibrio fischeri).